The chain runs to 243 residues: ATP synthase subunit a, chloroplastic (243 aa).

Transmembrane regions (helical) follow at residues 32-52 (AQVL…ALIA), 91-111 (IPFV…GALI), 130-150 (INTT…AGLN), 195-215 (LVVA…MMFL), and 216-236 (GLFT…AYIG).

This sequence belongs to the ATPase A chain family. In terms of assembly, F-type ATPases have 2 components, CF(1) - the catalytic core - and CF(0) - the membrane proton channel. CF(1) has five subunits: alpha(3), beta(3), gamma(1), delta(1), epsilon(1). CF(0) has four main subunits: a, b, b' and c.

Its subcellular location is the plastid. It localises to the chloroplast thylakoid membrane. Its function is as follows. Key component of the proton channel; it plays a direct role in the translocation of protons across the membrane. The sequence is that of ATP synthase subunit a, chloroplastic from Chaetosphaeridium globosum (Charophycean green alga).